The following is a 501-amino-acid chain: Sucrose transport protein SUT2 (501 aa).

Over 1-31 (MPRRPSGGGGGAGPAAAAVRKVPLRKLLRAA) the chain is Cytoplasmic. Residues 32–52 (SVACGVQFGWALQLSLLTPYV) traverse the membrane as a helical segment. Over 53–55 (QEL) the chain is Extracellular. The chain crosses the membrane as a helical span at residues 56–76 (GIPHAFASLVWLCGPLSGLLV). Over 77–98 (QPLVGHLSDRIAPAASPLGRRR) the chain is Cytoplasmic. A helical membrane pass occupies residues 99 to 119 (PFIAAGAASIAAAVLTVGFSA). Topologically, residues 120–135 (DLGRIFGDSITPGSTR) are extracellular. A helical membrane pass occupies residues 136-156 (LGAIIVYLVGFWLLDVGNNAT). At 157 to 176 (QGPCRAFLADLTENDPRRTR) the chain is on the cytoplasmic side. Residues 177 to 197 (IANAYFSLFMALGNILGYATG) form a helical membrane-spanning segment. Topologically, residues 198-222 (AYSGWYKIFPFTVTPSCSISCANLK) are extracellular. A helical membrane pass occupies residues 223 to 243 (SAFLLDIIILVVTTCITVASV). The Cytoplasmic segment spans residues 244–278 (QEPQSFGSDEADHPSTEQEAFLWELFGSFRYFTLP). A helical transmembrane segment spans residues 279–299 (VWMVLIVTALTWIGWFPFILF). Residues 300-327 (DTDWMGREIYRGSPDDPSITQSYHDGVR) are Extracellular-facing. A helical transmembrane segment spans residues 328 to 348 (MGSFGLMLNSVLLGFTSIVLE). Over 349-356 (KLCRKWGA) the chain is Cytoplasmic. The helical transmembrane segment at 357 to 377 (GLVWGVSNILMALCFVAMLVI) threads the bilayer. The Extracellular portion of the chain corresponds to 378–394 (TYVAKNMDYPPSGVPPT). A helical transmembrane segment spans residues 395–415 (GIVIASLVVFTILGAPLAITY). Residues 416–433 (SIPYAMAASRVENLGLGQ) lie on the Cytoplasmic side of the membrane. The chain crosses the membrane as a helical span at residues 434-454 (GLAMGILNLAIVIPQVIVSLG). Residues 455 to 467 (SGPWDQLFGGGNA) are Extracellular-facing. Residues 468 to 488 (PAFAVAAAASFIGGLVAILGL) form a helical membrane-spanning segment. Residues 489-501 (PRARIASRRRGHR) lie on the Cytoplasmic side of the membrane.

This sequence belongs to the glycoside-pentoside-hexuronide (GPH) cation symporter transporter (TC 2.A.2.4) family. Homodimer. As to expression, widely expressed.

The protein resides in the cell membrane. It participates in glycan biosynthesis; sucrose metabolism. Functionally, responsible for the transport of sucrose into the cell, with the concomitant uptake of protons (symport system). May also transport other glucosides. The sequence is that of Sucrose transport protein SUT2 (SUT2) from Oryza sativa subsp. japonica (Rice).